Here is a 1403-residue protein sequence, read N- to C-terminus: Baculoviral IAP repeat-containing protein 1a (1403 aa).

BIR repeat units follow at residues 63–128 (RLKT…EFLQ), 162–228 (RLES…EFLQ), and 281–346 (RMDT…VFLQ). Cys315, Cys318, His335, and Cys342 together coordinate Zn(2+). In terms of domain architecture, NACHT spans 464 to 758 (SVMCVEGETG…EFLAAMRLTE (295 aa)). Lys476 contacts ATP.

As to quaternary structure, interacts (via NACHT domain) with APAF1 (via CARD and NACHT domains).

Its function is as follows. Anti-apoptotic protein which acts by inhibiting the activities of CASP3, CASP7 and CASP9. Can inhibit the autocleavage of pro-CASP9 and cleavage of pro-CASP3 by CASP9. Capable of inhibiting CASP9 autoproteolysis at 'Asp-315' and decreasing the rate of auto proteolysis at 'Asp-330'. Acts as a mediator of neuronal survival in pathological conditions. Prevents motor-neuron apoptosis induced by a variety of signals. The sequence is that of Baculoviral IAP repeat-containing protein 1a (Naip1) from Mus musculus (Mouse).